The chain runs to 247 residues: Small ribosomal subunit protein uS2 (247 aa).

It belongs to the universal ribosomal protein uS2 family.

The protein is Small ribosomal subunit protein uS2 of Cupriavidus taiwanensis (strain DSM 17343 / BCRC 17206 / CCUG 44338 / CIP 107171 / LMG 19424 / R1) (Ralstonia taiwanensis (strain LMG 19424)).